Consider the following 255-residue polypeptide: tRNA (guanine-N(1)-)-methyltransferase (255 aa).

S-adenosyl-L-methionine contacts are provided by residues glycine 113 and 133–138 (IGDYVL).

Belongs to the RNA methyltransferase TrmD family. In terms of assembly, homodimer.

It is found in the cytoplasm. The enzyme catalyses guanosine(37) in tRNA + S-adenosyl-L-methionine = N(1)-methylguanosine(37) in tRNA + S-adenosyl-L-homocysteine + H(+). Specifically methylates guanosine-37 in various tRNAs. In Salmonella schwarzengrund (strain CVM19633), this protein is tRNA (guanine-N(1)-)-methyltransferase.